Consider the following 327-residue polypeptide: Probable cell division protein WhiA (327 aa).

A DNA-binding region (H-T-H motif) is located at residues 275 to 308 (SLEELGRLADPPMTKDAVAGRIRRLLSMADRKAK). The interval 304–327 (DRKAKQDGIPDTESAVTPDLLEDA) is disordered.

Belongs to the WhiA family.

Involved in cell division and chromosome segregation. This Mycolicibacterium gilvum (strain PYR-GCK) (Mycobacterium gilvum (strain PYR-GCK)) protein is Probable cell division protein WhiA.